The following is a 491-amino-acid chain: COP9 signalosome complex subunit 1 (491 aa).

Residues Cys269–Gln431 form the PCI domain. The interval His465–Met491 is disordered. 2 positions are modified to phosphoserine: Ser468 and Ser474. Residues Gly476 to Met491 are compositionally biased toward polar residues. Residue Thr479 is modified to Phosphothreonine. Residue Ser483 is modified to Phosphoserine.

This sequence belongs to the CSN1 family. In terms of assembly, component of the CSN complex, composed of COPS1/GPS1, COPS2, COPS3, COPS4, COPS5, COPS6, COPS7 (COPS7A or COPS7B), COPS8 and COPS9 isoform 1. In the complex, it probably interacts directly with COPS2, COPS3, COPS4 and COPS5. Interacts directly with inositol kinase ITPK1. Interacts with CAPN8. Interacts with USP48. Interacts with ASB4; this interaction negatively regulates GPS1. As to expression, widely expressed.

The protein localises to the cytoplasm. It localises to the nucleus. Functionally, essential component of the COP9 signalosome complex (CSN), a complex involved in various cellular and developmental processes. The CSN complex is an essential regulator of the ubiquitin (Ubl) conjugation pathway by mediating the deneddylation of the cullin subunits of SCF-type E3 ligase complexes, leading to decrease the Ubl ligase activity of SCF-type complexes such as SCF, CSA or DDB2. The complex is also involved in phosphorylation of p53/TP53, c-jun/JUN, IkappaBalpha/NFKBIA, ITPK1 and IRF8/ICSBP, possibly via its association with CK2 and PKD kinases. CSN-dependent phosphorylation of TP53 and JUN promotes and protects degradation by the Ubl system, respectively. Suppresses G-protein- and mitogen-activated protein kinase-mediated signal transduction. This is COP9 signalosome complex subunit 1 (GPS1) from Homo sapiens (Human).